The primary structure comprises 377 residues: Ribosomal RNA large subunit methyltransferase G (377 aa).

Belongs to the methyltransferase superfamily. RlmG family.

It localises to the cytoplasm. The catalysed reaction is guanosine(1835) in 23S rRNA + S-adenosyl-L-methionine = N(2)-methylguanosine(1835) in 23S rRNA + S-adenosyl-L-homocysteine + H(+). Specifically methylates the guanine in position 1835 (m2G1835) of 23S rRNA. The chain is Ribosomal RNA large subunit methyltransferase G from Aeromonas salmonicida (strain A449).